The primary structure comprises 211 residues: MKVPEAAISRLITYLRILEELEAQGVHRTSSEQLGELAQVTAFQVRKDLSYFGSYGTRGVGYTVPVLKRELRHILGLNRKWGLCIVGMGRLGSALADYPGFGESFELRGFFDVDPEKVGRPVRGGVIEHVDLLPQRVPGRIEIALLTVPREAAQKAADLLVAAGIKGILNFAPVVLEVPKEVAVENVDFLAGLTRLSFAILNPKWREEMMG.

Positions 13–52 form a DNA-binding region, H-T-H motif; that stretch reads TYLRILEELEAQGVHRTSSEQLGELAQVTAFQVRKDLSYF. 87–92 lines the NAD(+) pocket; sequence GMGRLG.

It belongs to the transcriptional regulatory Rex family. Homodimer.

The protein localises to the cytoplasm. In terms of biological role, modulates transcription in response to changes in cellular NADH/NAD(+) redox state. This chain is Redox-sensing transcriptional repressor Rex, found in Thermus aquaticus.